Consider the following 97-residue polypeptide: Aspartyl/glutamyl-tRNA(Asn/Gln) amidotransferase subunit C (97 aa).

Belongs to the GatC family. As to quaternary structure, heterotrimer of A, B and C subunits.

The catalysed reaction is L-glutamyl-tRNA(Gln) + L-glutamine + ATP + H2O = L-glutaminyl-tRNA(Gln) + L-glutamate + ADP + phosphate + H(+). It catalyses the reaction L-aspartyl-tRNA(Asn) + L-glutamine + ATP + H2O = L-asparaginyl-tRNA(Asn) + L-glutamate + ADP + phosphate + 2 H(+). In terms of biological role, allows the formation of correctly charged Asn-tRNA(Asn) or Gln-tRNA(Gln) through the transamidation of misacylated Asp-tRNA(Asn) or Glu-tRNA(Gln) in organisms which lack either or both of asparaginyl-tRNA or glutaminyl-tRNA synthetases. The reaction takes place in the presence of glutamine and ATP through an activated phospho-Asp-tRNA(Asn) or phospho-Glu-tRNA(Gln). In Prochlorococcus marinus (strain MIT 9301), this protein is Aspartyl/glutamyl-tRNA(Asn/Gln) amidotransferase subunit C.